A 543-amino-acid chain; its full sequence is CTP synthase (543 aa).

The interval 1–267 (MAKFVFVTGG…CREVLDVLNL (267 aa)) is amidoligase domain. Ser13 lines the CTP pocket. Ser13 contributes to the UTP binding site. 14 to 19 (SIGKGI) provides a ligand contact to ATP. Position 54 (Tyr54) interacts with L-glutamine. Position 71 (Asp71) interacts with ATP. Positions 71 and 141 each coordinate Mg(2+). CTP contacts are provided by residues 148 to 150 (DIE), 188 to 193 (KTKPTQ), and Lys224. Residues 188 to 193 (KTKPTQ) and Lys224 contribute to the UTP site. The region spanning 292–534 (KVALVGKYVQ…IEAAQQRLPN (243 aa)) is the Glutamine amidotransferase type-1 domain. Gly354 serves as a coordination point for L-glutamine. The active-site Nucleophile; for glutamine hydrolysis is Cys381. L-glutamine-binding positions include 382 to 385 (LGMQ), Glu405, and Arg462. Catalysis depends on residues His507 and Glu509.

It belongs to the CTP synthase family. Homotetramer.

It catalyses the reaction UTP + L-glutamine + ATP + H2O = CTP + L-glutamate + ADP + phosphate + 2 H(+). It carries out the reaction L-glutamine + H2O = L-glutamate + NH4(+). The catalysed reaction is UTP + NH4(+) + ATP = CTP + ADP + phosphate + 2 H(+). It participates in pyrimidine metabolism; CTP biosynthesis via de novo pathway; CTP from UDP: step 2/2. Its activity is regulated as follows. Allosterically activated by GTP, when glutamine is the substrate; GTP has no effect on the reaction when ammonia is the substrate. The allosteric effector GTP functions by stabilizing the protein conformation that binds the tetrahedral intermediate(s) formed during glutamine hydrolysis. Inhibited by the product CTP, via allosteric rather than competitive inhibition. In terms of biological role, catalyzes the ATP-dependent amination of UTP to CTP with either L-glutamine or ammonia as the source of nitrogen. Regulates intracellular CTP levels through interactions with the four ribonucleotide triphosphates. In Synechococcus sp. (strain WH7803), this protein is CTP synthase.